A 77-amino-acid polypeptide reads, in one-letter code: MKLIIFTGLFLFAIVSLIEAEEESGRVCIPLNGECSKSPNKCCDNINCDCYLRFEKGVQTGRPCFCTEKDVIFERDE.

The first 20 residues, 1–20 (MKLIIFTGLFLFAIVSLIEA), serve as a signal peptide directing secretion. Positions 21–26 (EEESGR) are excised as a propeptide.

This sequence belongs to the neurotoxin 19 (CSTX) family. 09 (U10-Lctx) subfamily. Contains 4 disulfide bonds. Expressed by the venom gland.

It is found in the secreted. This chain is U10-lycotoxin-Ls1d, found in Lycosa singoriensis (Wolf spider).